The chain runs to 156 residues: Small ribosomal subunit protein bS16 (156 aa).

Low complexity predominate over residues 124 to 135 (AAKAAEAETPAE). The segment at 124-156 (AAKAAEAETPAEVQHDDEKVELADVEESAPESV) is disordered. The segment covering 136–145 (VQHDDEKVEL) has biased composition (basic and acidic residues). Residues 146–156 (ADVEESAPESV) show a composition bias toward acidic residues.

It belongs to the bacterial ribosomal protein bS16 family.

This is Small ribosomal subunit protein bS16 from Bifidobacterium animalis subsp. lactis (strain AD011).